Reading from the N-terminus, the 173-residue chain is uncharacterized protein (173 aa).

Residues 1–15 constitute a propeptide, leader sequence; the sequence is MERKLSQRAGNTFKG. An N-methylphenylalanine modification is found at F16. The helical transmembrane segment at 16-37 threads the bilayer; sequence FTLVEVLITLAIISLVFSLILI.

The protein resides in the membrane. This is an uncharacterized protein from Aquifex aeolicus (strain VF5).